The following is a 739-amino-acid chain: MEHVTVSEEPSATLMYHVERPIFSEAYIDSELLHKRKKTPKPYKLRVAEHLCCSSEKVKSVVFGFLPILTWLPSYPLKEYLFGDIVSGISTGVMQLPQGLAYAMLAAVPPVFGLYSSFYPVLLYTFFGTSKHISIGTFAVISLMIGGVAVREAPDSMFMVNGTNSSLVVNIEARDSRRVEVVVALTTLVGIIQFVLGLLRFGFLAIYLTEPLVRGFTTAAAVHVSVSQLKYLLGVKTARFNGPLSVVYSLDAVLRNIADTNIVTLIIGLGCTVFLYIIKQLNERFKKKLLIPIPGEIIVVIVSTGISYGMLMSENYGVDVVGKIPTGLLPPKVPDFSVFPNLFADAVPIAVVGFSITISLAKTFALKYGYSVDGNQELIALGLCNFVSSFFHTFVVTASMSRSLVQESTGGHTEIAGLLASLLVLLVVVAIGFVFQPLPTTVLAAIIMVNLLGMFKQTRDIPVLWRKSKIELAIWLVSFFASVLLGLDYGLAVAMAFAILTVIYRTQRPKNVVLGQIPDTGLYFDVDEYEEAEECSGIKIFQSNSSIYFANSELYVKALKAKTGIDPEKLLDAKKLQLKYAKRDTEGTKTVNQGSLLKKNAVVLLDMELGVTHEVLNGPQKPKHVHTNGQMTEKHIESESEDEFFLQRLTPIHSVILDFTPVNFIDSVGAKTIKSVIKEYATVDVKVVLAGCSRTLLSELRTLQFFSEPVTPDLIFPTIHDAVLQCKRWRDLPVHPNIH.

At 1–76 (MEHVTVSEEP…PILTWLPSYP (76 aa)) the chain is on the cytoplasmic side. A helical transmembrane segment spans residues 77 to 106 (LKEYLFGDIVSGISTGVMQLPQGLAYAMLA). Topologically, residues 107 to 109 (AVP) are extracellular. A helical transmembrane segment spans residues 110 to 127 (PVFGLYSSFYPVLLYTFF). The Cytoplasmic segment spans residues 128–138 (GTSKHISIGTF). A helical membrane pass occupies residues 139-152 (AVISLMIGGVAVRE). The Extracellular segment spans residues 153–169 (APDSMFMVNGTNSSLVV). N161 and N164 each carry an N-linked (GlcNAc...) asparagine glycan. Residues 170–199 (NIEARDSRRVEVVVALTTLVGIIQFVLGLL) form a helical membrane-spanning segment. Residues 200–209 (RFGFLAIYLT) are Cytoplasmic-facing. A helical membrane pass occupies residues 210-233 (EPLVRGFTTAAAVHVSVSQLKYLL). Residues 234–244 (GVKTARFNGPL) lie on the Extracellular side of the membrane. The segment at residues 245–256 (SVVYSLDAVLRN) is an intramembrane region (helical). At 257–261 (IADTN) the chain is on the extracellular side. A helical membrane pass occupies residues 262 to 285 (IVTLIIGLGCTVFLYIIKQLNERF). The Cytoplasmic portion of the chain corresponds to 286-294 (KKKLLIPIP). Residues 295–310 (GEIIVVIVSTGISYGM) form a helical membrane-spanning segment. The Extracellular segment spans residues 311–335 (LMSENYGVDVVGKIPTGLLPPKVPD). The helical transmembrane segment at 336 to 370 (FSVFPNLFADAVPIAVVGFSITISLAKTFALKYGY) threads the bilayer. Residues 371 to 373 (SVD) are Cytoplasmic-facing. Residues 374–391 (GNQELIALGLCNFVSSFF) traverse the membrane as a helical segment. At 392–399 (HTFVVTAS) the chain is on the extracellular side. The chain crosses the membrane as a helical span at residues 400-409 (MSRSLVQEST). Residue S401 participates in salicylate binding. Residues 410–413 (GGHT) lie on the Cytoplasmic side of the membrane. The chain crosses the membrane as a helical span at residues 414-435 (EIAGLLASLLVLLVVVAIGFVF). Topologically, residues 436 to 439 (QPLP) are extracellular. A helical transmembrane segment spans residues 440 to 467 (TTVLAAIIMVNLLGMFKQTRDIPVLWRK). S468 is a topological domain (cytoplasmic). A helical membrane pass occupies residues 469-484 (KIELAIWLVSFFASVL). The Extracellular segment spans residues 485–486 (LG). The helical transmembrane segment at 487–507 (LDYGLAVAMAFAILTVIYRTQ) threads the bilayer. An extended region for STAS domain region spans residues 508–731 (RPKNVVLGQI…AVLQCKRWRD (224 aa)). Residues 508–739 (RPKNVVLGQI…RDLPVHPNIH (232 aa)) are Cytoplasmic-facing. The STAS domain occupies 528–726 (EYEEAEECSG…PTIHDAVLQC (199 aa)).

This sequence belongs to the SLC26A/SulP transporter (TC 2.A.53) family. As to quaternary structure, homodimer. Interacts (via STAS domain) with CALM; this interaction is calcium-dependent. As to expression, expressed in hair cells of the auditory organs.

The protein localises to the cell membrane. The enzyme catalyses oxalate(in) + chloride(out) = oxalate(out) + chloride(in). It catalyses the reaction sulfate(out) + chloride(in) = sulfate(in) + chloride(out). Its activity is regulated as follows. Sulfate/chloride antiport activity is inhibited by salicylate; this inhibition is reversible. Its function is as follows. Electrogenic antiporter that exchanges sulfate or oxalate for chloride ion in a strictly coupled manner with a 1:1 stoichiometry. Adopts a dynamic conformation, which alternates between the exposure of the central binding site to the extra- and intracellular solutions leading to an inward-to-outward conformational transition during the transport cycle. Generates voltage-dependent charge movements resembling to the non-linear capacitance (NLC) of the cell membrane, but which are not associated to electromotile activity. The polypeptide is Prestin (Danio rerio (Zebrafish)).